A 98-amino-acid polypeptide reads, in one-letter code: Large ribosomal subunit protein mL53 (98 aa).

It belongs to the mitochondrion-specific ribosomal protein mL53 family. As to quaternary structure, component of the mitochondrial large ribosomal subunit (mt-LSU). Mature N.crassa 74S mitochondrial ribosomes consist of a small (37S) and a large (54S) subunit. The 37S small subunit contains a 16S ribosomal RNA (16S mt-rRNA) and 32 different proteins. The 54S large subunit contains a 23S rRNA (23S mt-rRNA) and 42 different proteins.

The protein resides in the mitochondrion. Component of the mitochondrial ribosome (mitoribosome), a dedicated translation machinery responsible for the synthesis of mitochondrial genome-encoded proteins, including at least some of the essential transmembrane subunits of the mitochondrial respiratory chain. The mitoribosomes are attached to the mitochondrial inner membrane and translation products are cotranslationally integrated into the membrane. This Neurospora crassa (strain ATCC 24698 / 74-OR23-1A / CBS 708.71 / DSM 1257 / FGSC 987) protein is Large ribosomal subunit protein mL53 (mrpl44).